The primary structure comprises 101 residues: Apolipoprotein C-II (101 aa).

The first 22 residues, 1 to 22, serve as a signal peptide directing secretion; that stretch reads MGTRLLPALFLVLLVLGFEVQG. Residues 23–38 are O-glycosylated at one site; the sequence is TQQPQQDEMPSPTFLT. The interval 66 to 74 is lipid binding; that stretch reads AVDEKLRDL. Residues 78–101 are lipoprotein lipase cofactor; sequence STAAMSTYTGIFTDQVLSVLKGEE.

This sequence belongs to the apolipoprotein C2 family. In terms of processing, proapolipoprotein C-II is synthesized as a sialic acid containing glycoprotein which is subsequently desialylated prior to its proteolytic processing. Post-translationally, proapolipoprotein C-II, the major form found in plasma undergoes proteolytic cleavage of its N-terminal hexapeptide to generate apolipoprotein C-II, which occurs as the minor form in plasma. In terms of tissue distribution, liver and intestine.

The protein resides in the secreted. Its function is as follows. Component of chylomicrons, very low-density lipoproteins (VLDL), low-density lipoproteins (LDL), and high-density lipoproteins (HDL) in plasma. Plays an important role in lipoprotein metabolism as an activator of lipoprotein lipase. Both proapolipoprotein C-II and apolipoprotein C-II can activate lipoprotein lipase. In normolipidemic individuals, it is mainly distributed in the HDL, whereas in hypertriglyceridemic individuals, predominantly found in the VLDL and LDL. This Homo sapiens (Human) protein is Apolipoprotein C-II (APOC2).